The following is a 728-amino-acid chain: Catalase-peroxidase (728 aa).

The interval 1–26 (MDNPTDTAGKCPVAHGNKPRGPSNRD) is disordered. Residues 96-218 (WHSAGTYRIT…LGAVQMGLIY (123 aa)) constitute a cross-link (tryptophyl-tyrosyl-methioninium (Trp-Tyr) (with M-244)). His-97 functions as the Proton acceptor in the catalytic mechanism. Positions 218 to 244 (YVNPEGPGGNPDPLASARDIRETFARM) form a cross-link, tryptophyl-tyrosyl-methioninium (Tyr-Met) (with W-96). His-259 provides a ligand contact to heme b.

Belongs to the peroxidase family. Peroxidase/catalase subfamily. As to quaternary structure, homodimer or homotetramer. The cofactor is heme b. Post-translationally, formation of the three residue Trp-Tyr-Met cross-link is important for the catalase, but not the peroxidase activity of the enzyme.

It carries out the reaction H2O2 + AH2 = A + 2 H2O. The enzyme catalyses 2 H2O2 = O2 + 2 H2O. Its function is as follows. Bifunctional enzyme with both catalase and broad-spectrum peroxidase activity. This is Catalase-peroxidase from Rhizobium etli (strain CIAT 652).